A 988-amino-acid polypeptide reads, in one-letter code: Squamosa promoter-binding-like protein 16 (988 aa).

A disordered region spans residues 52-79 (GTPVDLTRPSKKVRSGSPGSGGGGGGNY). The segment covering 69–78 (PGSGGGGGGN) has biased composition (gly residues). Residues 79-156 (YPKCQVDNCK…DGHNRRRRKT (78 aa)) form an SBP-type zinc finger. Zn(2+)-binding residues include cysteine 82, cysteine 87, cysteine 104, histidine 107, cysteine 123, cysteine 126, histidine 130, and cysteine 142. The Bipartite nuclear localization signal signature appears at 139–155 (KRSCRRRLDGHNRRRRK). Disordered regions lie at residues 240–262 (RKNPEQPSPMNPQNSMNGASSPS) and 289–416 (GFGN…DTST). Composition is skewed to polar residues over residues 250–262 (NPQNSMNGASSPS), 301–311 (LTSSDHSATTS), and 327–358 (RTSSTNHSPSQYSDSRGQDTRSSLSLQLFTSS). Low complexity predominate over residues 368 to 379 (ASSTKYYSSASS).

It depends on Zn(2+) as a cofactor.

The protein localises to the nucleus. Functionally, trans-acting factor that binds specifically to the consensus nucleotide sequence 5'-TNCGTACAA-3'. The polypeptide is Squamosa promoter-binding-like protein 16 (SPL16) (Arabidopsis thaliana (Mouse-ear cress)).